Consider the following 252-residue polypeptide: Oil body-associated protein 2A (252 aa).

The segment at 1–31 (MASSDGKPLPTPASVGGGGGSSTAPPGQPTT) is disordered. A compositionally biased stretch (low complexity) spans 22 to 31 (STAPPGQPTT).

Belongs to the OBAP family.

This is Oil body-associated protein 2A from Zea mays (Maize).